The chain runs to 204 residues: Large ribosomal subunit protein uL4 (204 aa).

The disordered stretch occupies residues 53–73; the sequence is AFVSGGGKKPWRQKGRGGARA.

The protein belongs to the universal ribosomal protein uL4 family. As to quaternary structure, part of the 50S ribosomal subunit.

In terms of biological role, one of the primary rRNA binding proteins, this protein initially binds near the 5'-end of the 23S rRNA. It is important during the early stages of 50S assembly. It makes multiple contacts with different domains of the 23S rRNA in the assembled 50S subunit and ribosome. Its function is as follows. Forms part of the polypeptide exit tunnel. The chain is Large ribosomal subunit protein uL4 from Campylobacter concisus (strain 13826).